A 474-amino-acid chain; its full sequence is tRNA-2-methylthio-N(6)-dimethylallyladenosine synthase (474 aa).

The MTTase N-terminal domain maps to 3-120 (KKLLIKTWGC…LPEMIKQSQS (118 aa)). Residues cysteine 12, cysteine 49, cysteine 83, cysteine 157, cysteine 161, and cysteine 164 each contribute to the [4Fe-4S] cluster site. In terms of domain architecture, Radical SAM core spans 143–375 (RAEGATAFVS…QQQINAQAMR (233 aa)). The TRAM domain occupies 378-441 (RLMLGTEQRV…ANSLRGEIVR (64 aa)).

Belongs to the methylthiotransferase family. MiaB subfamily. As to quaternary structure, monomer. [4Fe-4S] cluster serves as cofactor.

It is found in the cytoplasm. The enzyme catalyses N(6)-dimethylallyladenosine(37) in tRNA + (sulfur carrier)-SH + AH2 + 2 S-adenosyl-L-methionine = 2-methylsulfanyl-N(6)-dimethylallyladenosine(37) in tRNA + (sulfur carrier)-H + 5'-deoxyadenosine + L-methionine + A + S-adenosyl-L-homocysteine + 2 H(+). Functionally, catalyzes the methylthiolation of N6-(dimethylallyl)adenosine (i(6)A), leading to the formation of 2-methylthio-N6-(dimethylallyl)adenosine (ms(2)i(6)A) at position 37 in tRNAs that read codons beginning with uridine. This is tRNA-2-methylthio-N(6)-dimethylallyladenosine synthase from Vibrio vulnificus (strain CMCP6).